We begin with the raw amino-acid sequence, 427 residues long: Gamma-glutamyl phosphate reductase (427 aa).

It belongs to the gamma-glutamyl phosphate reductase family.

The protein localises to the cytoplasm. The catalysed reaction is L-glutamate 5-semialdehyde + phosphate + NADP(+) = L-glutamyl 5-phosphate + NADPH + H(+). The protein operates within amino-acid biosynthesis; L-proline biosynthesis; L-glutamate 5-semialdehyde from L-glutamate: step 2/2. In terms of biological role, catalyzes the NADPH-dependent reduction of L-glutamate 5-phosphate into L-glutamate 5-semialdehyde and phosphate. The product spontaneously undergoes cyclization to form 1-pyrroline-5-carboxylate. The chain is Gamma-glutamyl phosphate reductase from Rhizobium etli (strain ATCC 51251 / DSM 11541 / JCM 21823 / NBRC 15573 / CFN 42).